The primary structure comprises 518 residues: GTPase MTG2, mitochondrial (518 aa).

A mitochondrion-targeting transit peptide spans 1 to 23 (MSIAWSSVFKRELRLERFLPRVY). In terms of domain architecture, Obg spans 89–339 (GNFVDVRIVK…QHFLFELKSI (251 aa)). Positions 340–512 (ADLGLIGLPN…LKKKMFKCAR (173 aa)) constitute an OBG-type G domain. GTP-binding positions include 346 to 353 (GLPNAGKS), 394 to 398 (DIPGI), and 460 to 463 (NKVD).

Belongs to the TRAFAC class OBG-HflX-like GTPase superfamily. OBG GTPase family. Interacts with the mitochondrial 54S large ribosomal subunit.

The protein localises to the mitochondrion inner membrane. Functionally, required for mitochondrial protein synthesis. May be involved in mitochondrial ribosome biogenesis. This chain is GTPase MTG2, mitochondrial (MTG2), found in Saccharomyces cerevisiae (strain ATCC 204508 / S288c) (Baker's yeast).